Reading from the N-terminus, the 638-residue chain is Plasma kallikrein (638 aa).

A signal peptide spans 1-19; that stretch reads MILFKQATYFISLFATVSC. 4 consecutive Apple domains span residues 21-104, 111-194, 201-284, and 292-375; these read CLTQ…LKQC, CHRD…LKPC, CHMN…LLTC, and CHSK…LRLC. Intrachain disulfides connect Cys-21–Cys-104, Cys-47–Cys-77, Cys-51–Cys-57, Cys-111–Cys-194, Cys-137–Cys-166, Cys-141–Cys-147, Cys-201–Cys-284, Cys-227–Cys-256, Cys-231–Cys-237, Cys-292–Cys-375, Cys-318–Cys-347, Cys-322–Cys-328, Cys-340–Cys-345, Cys-383–Cys-503, Cys-419–Cys-435, Cys-517–Cys-584, Cys-548–Cys-563, and Cys-574–Cys-602. N-linked (GlcNAc...) asparagine glycosylation occurs at Asn-127. The N-linked (GlcNAc...) asparagine glycan is linked to Asn-308. One can recognise a Peptidase S1 domain in the interval 391 to 626; that stretch reads IVGGTNSSWG…YMDWILEKTQ (236 aa). A glycan (N-linked (GlcNAc...) asparagine) is linked at Asn-396. His-434 functions as the Charge relay system in the catalytic mechanism. N-linked (GlcNAc...) asparagine glycosylation occurs at Asn-453. Asp-483 (charge relay system) is an active-site residue. An N-linked (GlcNAc...) asparagine glycan is attached at Asn-494. The active-site Charge relay system is Ser-578.

The protein belongs to the peptidase S1 family. Plasma kallikrein subfamily. In terms of assembly, forms a heterodimer with SERPINA5. The zymogen is activated by factor XIIa, which cleaves the molecule into a light chain, which contains the active site, and a heavy chain, which associates with HMW kininogen. These chains are linked by one or more disulfide bonds. Interacts with iripin-3, a serine protease inhibitor from Ixodes ricinus saliva. Interacts with iripin-1, a serine protease inhibitor from Ixodes ricinus saliva. Found in plasma (at protein level).

The protein localises to the secreted. It catalyses the reaction Cleaves selectively Arg-|-Xaa and Lys-|-Xaa bonds, including Lys-|-Arg and Arg-|-Ser bonds in (human) kininogen to release bradykinin.. Inhibited by SERPINA5. Participates in the surface-dependent activation of blood coagulation. Activates, in a reciprocal reaction, coagulation factor XII/F12 after binding to negatively charged surfaces. Releases bradykinin from HMW kininogen and may also play a role in the renin-angiotensin system by converting prorenin into renin. The polypeptide is Plasma kallikrein (KLKB1) (Homo sapiens (Human)).